The primary structure comprises 324 residues: MPRFYLLSSCALLAFATSFCNAEKSQIRMPGVVPEADSYLCTSLELSDQENYLTGFKALTTKGTAHHILLFGCEEPGSDELVWDCGEMNKPDDEMPRAPTCGSKPAILYAWALDAPPLELPQDVGFRVGGDSNIRHLVMQVHYMHSKQEPDETGLEITHTEEPQPKLAATMLLVTGGTLPRNKTESFETACMIEEDVVMHPFAYRTHTHRHGKEVSGWLVKEDQKHEDHWKLIGRRDPQLAQMFVPVEDQAMTIQQGDMVTARCILQNNENRDISMGATEEDEMCNFYIMYWTDGEVMQDNTCYSPGAPDYKWAREADLNHIPK.

A signal peptide spans 1–22 (MPRFYLLSSCALLAFATSFCNA). 2 disulfides stabilise this stretch: Cys-41–Cys-85 and Cys-73–Cys-101. Residues His-66 and His-67 each coordinate Cu cation. His-142 contacts Cu cation. Asn-182 carries N-linked (GlcNAc...) asparagine glycosylation. Cu cation is bound by residues His-207, His-209, and Met-284. Cys-264 and Cys-285 are joined by a disulfide.

This sequence belongs to the copper type II ascorbate-dependent monooxygenase family. Cu(2+) is required as a cofactor.

It localises to the secreted. It catalyses the reaction a [peptide]-C-terminal glycine + 2 L-ascorbate + O2 = a [peptide]-C-terminal (2S)-2-hydroxyglycine + 2 monodehydro-L-ascorbate radical + H2O. Monooxygenase that catalyzes an essential reaction in C-terminal alpha-amidation of peptides. Produces an unstable peptidyl(2-hydroxyglycine) intermediate. C-terminal amidation of peptides such as neuropeptides is essential for full biological activity. The polypeptide is Probable peptidylglycine alpha-hydroxylating monooxygenase 1 (Caenorhabditis elegans).